An 867-amino-acid chain; its full sequence is Valine--tRNA ligase (867 aa).

Residues 42–52 (PNITGKIHMGH) carry the 'HIGH' region motif. The short motif at 521 to 525 (KMSKS) is the 'KMSKS' region element. Residue Lys-524 coordinates ATP. A coiled-coil region spans residues 794–867 (LGTLIDVKSE…QIISDLEAKA (74 aa)).

The protein belongs to the class-I aminoacyl-tRNA synthetase family. ValS type 1 subfamily. In terms of assembly, monomer.

The protein localises to the cytoplasm. It catalyses the reaction tRNA(Val) + L-valine + ATP = L-valyl-tRNA(Val) + AMP + diphosphate. Catalyzes the attachment of valine to tRNA(Val). As ValRS can inadvertently accommodate and process structurally similar amino acids such as threonine, to avoid such errors, it has a 'posttransfer' editing activity that hydrolyzes mischarged Thr-tRNA(Val) in a tRNA-dependent manner. The polypeptide is Valine--tRNA ligase (Fervidobacterium nodosum (strain ATCC 35602 / DSM 5306 / Rt17-B1)).